Reading from the N-terminus, the 62-residue chain is Beta-defensin 33 (62 aa).

Residues 1–20 (MRLLFLLFLLLVCLAQKTSG) form the signal peptide. 3 cysteine pairs are disulfide-bonded: cysteine 30/cysteine 59, cysteine 37/cysteine 52, and cysteine 45/cysteine 60.

This sequence belongs to the beta-defensin family.

The protein localises to the secreted. Its function is as follows. Has antibacterial activity. The polypeptide is Beta-defensin 33 (Defb33) (Rattus norvegicus (Rat)).